A 144-amino-acid polypeptide reads, in one-letter code: Large ribosomal subunit protein uL15 (144 aa).

The segment at 1 to 57 is disordered; it reads MRLNTLSPAAGSKHAPKRVGRGIGSGLGKTGGRGHKGQKSRSGGKVRPGFEGGQMPL. A compositionally biased stretch (gly residues) spans 21 to 31; that stretch reads RGIGSGLGKTG. The segment covering 32 to 44 has biased composition (basic residues); the sequence is GRGHKGQKSRSGG.

The protein belongs to the universal ribosomal protein uL15 family. As to quaternary structure, part of the 50S ribosomal subunit.

Its function is as follows. Binds to the 23S rRNA. In Vibrio vulnificus (strain CMCP6), this protein is Large ribosomal subunit protein uL15.